We begin with the raw amino-acid sequence, 246 residues long: Probable transcriptional regulatory protein ORF2U (246 aa).

It belongs to the TACO1 family.

The protein localises to the cytoplasm. The protein is Probable transcriptional regulatory protein ORF2U of Hathewaya histolytica (Clostridium histolyticum).